We begin with the raw amino-acid sequence, 438 residues long: MADYQGKNVVIIGLGLTGLSCVDFFLARGVTPRVMDTRMTPPGLDKLPEAVERHTGSLNDEWLMAADLIVASPGIALAHPSLSAAADAGIEIVGDIELFCREAQAPIVAITGSNGKSTVTTLVGEMAKAAGVNVGVGGNIGLPALMLLDDECELYVLELSSFQLETTSSLQAVAATILNVTEDHMDRYPFGLQQYRAAKLRIYENAKVCVVNADDALTMPIRGADERCVSFGVNMGDYHLNHQQGETWLRVKGEKVLNVKEMKLSGQHNYTNALAALALADAAGLPRASSLKALTTFTGLPHRFEVVLEHNGVRWINDSKATNVGSTEAALNGLHVDGTLHLLLGGDGKSADFSPLARYLNGDNVRLYCFGRDGVQLAALRPEVAEKTETMEQAMRLLAPRVQPGDMVLLSPACASLDQFKNFEQRGNEFARLAKELG.

Position 112 to 118 (112 to 118 (GSNGKST)) interacts with ATP.

It belongs to the MurCDEF family.

The protein resides in the cytoplasm. It catalyses the reaction UDP-N-acetyl-alpha-D-muramoyl-L-alanine + D-glutamate + ATP = UDP-N-acetyl-alpha-D-muramoyl-L-alanyl-D-glutamate + ADP + phosphate + H(+). The protein operates within cell wall biogenesis; peptidoglycan biosynthesis. In terms of biological role, cell wall formation. Catalyzes the addition of glutamate to the nucleotide precursor UDP-N-acetylmuramoyl-L-alanine (UMA). The polypeptide is UDP-N-acetylmuramoylalanine--D-glutamate ligase (Shigella dysenteriae serotype 1 (strain Sd197)).